The primary structure comprises 311 residues: GTP cyclohydrolase MptA (311 aa).

It belongs to the GTP cyclohydrolase IV family. Homodimer. Fe(2+) is required as a cofactor.

It catalyses the reaction GTP + H2O = 7,8-dihydroneopterin 2',3'-cyclic phosphate + formate + diphosphate + H(+). It participates in cofactor biosynthesis; 5,6,7,8-tetrahydromethanopterin biosynthesis. Functionally, converts GTP to 7,8-dihydro-D-neopterin 2',3'-cyclic phosphate, the first intermediate in the biosynthesis of coenzyme methanopterin. In Methanocorpusculum labreanum (strain ATCC 43576 / DSM 4855 / Z), this protein is GTP cyclohydrolase MptA.